The primary structure comprises 209 residues: Ribosomal RNA large subunit methyltransferase E (209 aa).

S-adenosyl-L-methionine contacts are provided by Gly63, Trp65, Asp83, Asp99, and Asp124. The active-site Proton acceptor is the Lys164.

It belongs to the class I-like SAM-binding methyltransferase superfamily. RNA methyltransferase RlmE family.

Its subcellular location is the cytoplasm. The catalysed reaction is uridine(2552) in 23S rRNA + S-adenosyl-L-methionine = 2'-O-methyluridine(2552) in 23S rRNA + S-adenosyl-L-homocysteine + H(+). In terms of biological role, specifically methylates the uridine in position 2552 of 23S rRNA at the 2'-O position of the ribose in the fully assembled 50S ribosomal subunit. In Aeromonas salmonicida (strain A449), this protein is Ribosomal RNA large subunit methyltransferase E.